The chain runs to 279 residues: Tryptophan 2,3-dioxygenase (279 aa).

Substrate is bound by residues 48-52 (FIVIH), tyrosine 110, and arginine 114. Residue histidine 237 participates in heme binding. Substrate is bound at residue threonine 251.

This sequence belongs to the tryptophan 2,3-dioxygenase family. In terms of assembly, homotetramer. The cofactor is heme.

The enzyme catalyses L-tryptophan + O2 = N-formyl-L-kynurenine. The protein operates within amino-acid degradation; L-tryptophan degradation via kynurenine pathway; L-kynurenine from L-tryptophan: step 1/2. In terms of biological role, heme-dependent dioxygenase that catalyzes the oxidative cleavage of the L-tryptophan (L-Trp) pyrrole ring and converts L-tryptophan to N-formyl-L-kynurenine. Catalyzes the oxidative cleavage of the indole moiety. This chain is Tryptophan 2,3-dioxygenase, found in Bacillus cereus (strain ZK / E33L).